The chain runs to 533 residues: CTP synthase (533 aa).

An amidoligase domain region spans residues 1-270 (MVHLAKYIVV…GDYIVRRIEL (270 aa)). Residue Ser16 participates in CTP binding. Ser16 provides a ligand contact to UTP. 17–22 (SIGKGI) is a binding site for ATP. Tyr57 provides a ligand contact to L-glutamine. ATP is bound at residue Asp74. Positions 74 and 144 each coordinate Mg(2+). Residues 151–153 (DIE), 191–196 (KTKPTQ), and Lys227 contribute to the CTP site. Residues 191–196 (KTKPTQ) and Lys227 contribute to the UTP site. One can recognise a Glutamine amidotransferase type-1 domain in the interval 303–533 (YVELEDSYIS…FLRAALERSR (231 aa)). Gly355 provides a ligand contact to L-glutamine. Cys382 (nucleophile; for glutamine hydrolysis) is an active-site residue. L-glutamine contacts are provided by residues 383 to 386 (LGMQ), Glu405, and Arg462. Residues His507 and Glu509 contribute to the active site.

This sequence belongs to the CTP synthase family. Homotetramer.

It catalyses the reaction UTP + L-glutamine + ATP + H2O = CTP + L-glutamate + ADP + phosphate + 2 H(+). The enzyme catalyses L-glutamine + H2O = L-glutamate + NH4(+). The catalysed reaction is UTP + NH4(+) + ATP = CTP + ADP + phosphate + 2 H(+). The protein operates within pyrimidine metabolism; CTP biosynthesis via de novo pathway; CTP from UDP: step 2/2. With respect to regulation, allosterically activated by GTP, when glutamine is the substrate; GTP has no effect on the reaction when ammonia is the substrate. The allosteric effector GTP functions by stabilizing the protein conformation that binds the tetrahedral intermediate(s) formed during glutamine hydrolysis. Inhibited by the product CTP, via allosteric rather than competitive inhibition. In terms of biological role, catalyzes the ATP-dependent amination of UTP to CTP with either L-glutamine or ammonia as the source of nitrogen. Regulates intracellular CTP levels through interactions with the four ribonucleotide triphosphates. In Methanothermobacter thermautotrophicus (strain ATCC 29096 / DSM 1053 / JCM 10044 / NBRC 100330 / Delta H) (Methanobacterium thermoautotrophicum), this protein is CTP synthase.